Consider the following 345-residue polypeptide: MAASNKIHLLKDLLILSRFNKYTPVFASFAGLWSTLLAGAARLAEHPSAISPAFVLRQTGLCFLAAYIFYGAGTVWNDWVDRDVDANVARTKDRPLASGKVTTFQAMLWMVLQTLATWYLLNVMLDGNDLYVLNPLHALMIAVHRIKNGRGTDGCTYRWKHFLPVLVASFLYPFGKRPAARKLYVYPQYILGFIVAWPAVIGWAATYGQHQPFTETVRQCLPLCSMVYFWIIYLNTAYSYQDVADDRKMNVNSFYNLGGQHLHLLLVALASPVPVCMLLFLREFDSFWLWATWLGGWTASFAEQLIHFDPKEPASGGTLHKSNFMLGIWTIFACAVELLRSASKV.

A run of 8 helical transmembrane segments spans residues 24–44 (PVFA…ARLA), 60–80 (GLCF…NDWV), 101–121 (VTTF…WYLL), 183–203 (LYVY…VIGW), 220–240 (CLPL…AYSY), 261–281 (HLHL…LLFL), 286–306 (SFWL…EQLI), and 319–339 (LHKS…VELL).

This sequence belongs to the UbiA prenyltransferase family. Requires Mg(2+) as cofactor.

The protein localises to the membrane. It participates in secondary metabolite biosynthesis; terpenoid biosynthesis. Polyprenyl transferase; part of the gene cluster that mediates the biosynthesis of diterpenoid pyrones. The first step of the pathway is the synthesis of the alpha-pyrone moiety by the polyketide synthase dpmpA via condensation of one acetyl-CoA starter unit with 3 malonyl-CoA units and 2 methylations. The alpha-pyrone is then combined with geranylgeranyl pyrophosphate (GGPP) formed by the GGPP synthase dpmpD through the action of the prenyltransferase dpmpC to yield a linear alpha-pyrone diterpenoid. Subsequent steps in the diterpenoid pyrone biosynthetic pathway involve the decalin core formation, which is initiated by the epoxidation of the C10-C11 olefin by the FAD-dependent oxidoreductase dpmpE, and is followed by a cyclization cascade catalyzed by the terpene cyclase dpmpB. The short chain dehydrogenase/reductase dpmpG then oxidizes the 8S hydroxy group to a ketone and the short chain dehydrogenase/reductase dpmpH reduces the ketone to the 8R hydroxy group to yield higginsianin B. Higginsianin B is further methylated by the methyltransferase dpmpI to produce the intermediate named FDDP B. The cytochrome P450 monooxygenase dpmpJ then oxidizes the C-26 methyl to primary alcohol, producing the final diterpenoid pyrone with a C-26 primary alcohol on the gamma-pyrone moiety named FDDP C. This chain is Polyprenyl transferase dpmpC, found in Macrophomina phaseolina (strain MS6) (Charcoal rot fungus).